The primary structure comprises 168 residues: Myosin regulatory light chain 11 (168 aa).

Alanine 2 carries the n,N,N-trimethylalanine modification. The residue at position 15 (serine 15) is a Phosphoserine. EF-hand domains lie at 24 to 59, 94 to 129, and 130 to 165; these read TQIQEFKEAFTVIDQNRDGIIDKDDLRETFAAMGRL, DPEDVIMGAFKVLDPDGKGSIKKSFLEELLTTQCDR, and FTPEEIKNMWAAFPPDVAGNVDYKNICYVITHGEDK. Aspartate 37, asparagine 39, aspartate 41, and aspartate 48 together coordinate Ca(2+).

As to quaternary structure, myosin is a hexamer of 2 heavy chains and 4 light chains. In terms of processing, the N-terminus is blocked. N,N,N-trimethylalanine, found in other myosin light chains would not have been detected in the N-terminal tryptic peptide in PubMed:7358336 because it would remain trimethylated and ninhydrin negative after hydrolysis.

Myosin regulatory subunit that plays an essential to maintain muscle integrity during early development. Plays a role in muscle contraction. The sequence is that of Myosin regulatory light chain 11 (MYL11) from Gallus gallus (Chicken).